The sequence spans 644 residues: DNA gyrase subunit B (644 aa).

A Toprim domain is found at 429-543 (CEIFLVEGDS…AGYVYIAQPP (115 aa)). Residues Glu-435, Asp-508, and Asp-510 each contribute to the Mg(2+) site.

It belongs to the type II topoisomerase GyrB family. As to quaternary structure, heterotetramer, composed of two GyrA and two GyrB chains. In the heterotetramer, GyrA contains the active site tyrosine that forms a transient covalent intermediate with DNA, while GyrB binds cofactors and catalyzes ATP hydrolysis. Mg(2+) is required as a cofactor. It depends on Mn(2+) as a cofactor. The cofactor is Ca(2+).

The protein localises to the cytoplasm. It catalyses the reaction ATP-dependent breakage, passage and rejoining of double-stranded DNA.. Its function is as follows. A type II topoisomerase that negatively supercoils closed circular double-stranded (ds) DNA in an ATP-dependent manner to modulate DNA topology and maintain chromosomes in an underwound state. Negative supercoiling favors strand separation, and DNA replication, transcription, recombination and repair, all of which involve strand separation. Also able to catalyze the interconversion of other topological isomers of dsDNA rings, including catenanes and knotted rings. Type II topoisomerases break and join 2 DNA strands simultaneously in an ATP-dependent manner. The protein is DNA gyrase subunit B of Staphylococcus aureus (strain MRSA252).